The chain runs to 1912 residues: Receptor-type tyrosine-protein phosphatase delta (1912 aa).

The first 20 residues, 1–20 (MVPVARPLSLLLTFFLCACA), serve as a signal peptide directing secretion. At 21–1266 (ETPPRFTRTP…PQPITDEEEG (1246 aa)) the chain is on the extracellular side. 2 consecutive Ig-like C2-type domains span residues 24–114 (PRFT…TRLT) and 126–224 (PTID…ANLY). Intrachain disulfides connect cysteine 45–cysteine 98 and cysteine 147–cysteine 207. The tract at residues 181-189 (ESIGGTPIR) is mini-exon peptide A9; sufficient for interaction with IL1RAPL1. Residues 227–230 (ELRE) are mini-exon peptide B; required for interaction with SLITRK2 and in the function in pre-synaptic differentiation; Acts as an adjustable linker to control relative positions and orientations of the PTPRD second and third immunoglobilin domains for their simultaneous interactions with the first immunoglobilin domain of IL1RAPL1 and IL1RAP; Modulates affinity for IL1RAPL1 and IL1RAP. The 83-residue stretch at 236 to 318 (PRFSIPPTNH…GVIEAIAQIT (83 aa)) folds into the Ig-like C2-type 3 domain. Asparagine 254 and asparagine 299 each carry an N-linked (GlcNAc...) asparagine glycan. Cysteine 257 and cysteine 302 are oxidised to a cystine. Fibronectin type-III domains follow at residues 325 to 415 (PPGT…TSEQ), 420 to 516 (APRD…TGVP), 518 to 607 (QPLN…TMQS), 612 to 709 (PPQD…TDED), 714 to 822 (PPRK…TTGA), 823 to 916 (VPGK…VPEE), 921 to 1016 (FPQN…TLPV), and 1020 to 1106 (FAKN…TAPD). N-linked (GlcNAc...) asparagine glycosylation is found at asparagine 724 and asparagine 832. Residues 1267-1287 (LIWVVGPVLAVVFIICIVIAI) form a helical membrane-spanning segment. Over 1288–1912 (LLYKRKRAES…YLGSFDHYAT (625 aa)) the chain is Cytoplasmic. The interval 1298–1319 (ESRKSSLPNSKEVPSHHPTDPV) is disordered. Residues 1310–1319 (VPSHHPTDPV) show a composition bias toward basic and acidic residues. 2 Tyrosine-protein phosphatase domains span residues 1357-1612 (FSQE…LLEA) and 1644-1903 (MELE…ALEY). Residues aspartate 1521, 1553-1559 (CSAGVGR), and glutamine 1597 each bind substrate. Cysteine 1553 (phosphocysteine intermediate) is an active-site residue. Catalysis depends on cysteine 1844, which acts as the Phosphocysteine intermediate.

The protein belongs to the protein-tyrosine phosphatase family. Receptor class 2A subfamily. As to quaternary structure, interacts with PPFIA1, PPFIA2 and PPFIA3. Interacts (via extracellular domain) with SLITRK4 (via LRR 1 and 2 repeats). Interacts with SLITRK2; induces presynaptic differentiation. Interacts (via the second immunoglobilin domain) with IL1RAPL1 (via the first immunoglobilin domain); induces pre- and postsynaptic differentiation of neurons and synapse formation. Isoform G, isoform H, isoform I, isoform J, and isoform K do not interact with IL1RAPL1. Interacts (via the third immunoglobilin domain) with IL1RAP (via the first immunoglobilin domain); induces pre- and postsynaptic differentiation of neurons. In terms of processing, a cleavage occurs, separating the extracellular domain from the transmembrane segment. This process called 'ectodomain shedding' is thought to be involved in receptor desensitization, signal transduction and/or membrane localization. In terms of tissue distribution, brain, kidney, heart, and some B-cell lines.

It is found in the membrane. It carries out the reaction O-phospho-L-tyrosyl-[protein] + H2O = L-tyrosyl-[protein] + phosphate. Its function is as follows. Can bidirectionally induce pre- and post-synaptic differentiation of neurons by mediating interaction with IL1RAP and IL1RAPL1 trans-synaptically. Involved in pre-synaptic differentiation through interaction with SLITRK2. In Mus musculus (Mouse), this protein is Receptor-type tyrosine-protein phosphatase delta (Ptprd).